The sequence spans 137 residues: uncharacterized protein (137 aa).

The next 4 membrane-spanning stretches (helical) occupy residues 20–39 (YGKI…GYAV), 44–61 (WFIT…LSLV), 86–105 (VEIF…ALDL), and 109–131 (AALA…YGYY).

The protein resides in the cell membrane. This is an uncharacterized protein from Archaeoglobus fulgidus (strain ATCC 49558 / DSM 4304 / JCM 9628 / NBRC 100126 / VC-16).